Consider the following 452-residue polypeptide: Isocitrate dehydrogenase [NADP], mitochondrial (452 aa).

The N-terminal 39 residues, 1 to 39, are a transit peptide targeting the mitochondrion; that stretch reads MAGYLRVVRSLCRASGSRPAWAPAALTAPTSQEQPRRHY. Lys45, Lys48, Lys67, and Lys69 each carry N6-acetyllysine. Lys80 and Lys106 each carry N6-acetyllysine; alternate. Lys80 and Lys106 each carry N6-succinyllysine; alternate. NADP(+) contacts are provided by residues 115–117 and Arg122; that span reads TIT. Thr117 lines the D-threo-isocitrate pocket. D-threo-isocitrate is bound by residues 134–140 and Arg149; that span reads SPNGTIR. Lys155 bears the N6-acetyllysine mark. Position 166 is an N6-acetyllysine; alternate (Lys166). N6-succinyllysine; alternate is present on Lys166. D-threo-isocitrate is bound at residue Arg172. N6-acetyllysine; alternate occurs at positions 180 and 193. 2 positions are modified to N6-succinyllysine; alternate: Lys180 and Lys193. Position 199 is an N6-acetyllysine (Lys199). Residue Lys256 is modified to N6-acetyllysine; alternate. Lys256 carries the N6-succinyllysine; alternate modification. N6-acetyllysine occurs at positions 263, 272, 275, and 280. Position 282 is an N6-acetyllysine; alternate (Lys282). Lys282 is modified (N6-succinyllysine; alternate). Mn(2+) is bound at residue Asp291. Lys299 is an NADP(+) binding site. Asp314 contributes to the Mn(2+) binding site. Residues 349-354 and Asn367 each bind NADP(+); that span reads GTVTRH. N6-acetyllysine; alternate is present on Lys384. Lys384 carries the N6-succinyllysine; alternate modification. 3 positions are modified to N6-acetyllysine: Lys400, Lys413, and Lys442.

Belongs to the isocitrate and isopropylmalate dehydrogenases family. In terms of assembly, homodimer. It depends on Mg(2+) as a cofactor. Mn(2+) is required as a cofactor. In terms of processing, acetylation at Lys-413 dramatically reduces catalytic activity. Deacetylated by SIRT3.

It is found in the mitochondrion. The catalysed reaction is D-threo-isocitrate + NADP(+) = 2-oxoglutarate + CO2 + NADPH. Plays a role in intermediary metabolism and energy production. It may tightly associate or interact with the pyruvate dehydrogenase complex. This is Isocitrate dehydrogenase [NADP], mitochondrial (IDH2) from Homo sapiens (Human).